The primary structure comprises 291 residues: 4-hydroxy-tetrahydrodipicolinate synthase (291 aa).

Thr-47 provides a ligand contact to pyruvate. Residue Tyr-134 is the Proton donor/acceptor of the active site. Lys-162 acts as the Schiff-base intermediate with substrate in catalysis. A pyruvate-binding site is contributed by Ile-205.

Belongs to the DapA family. As to quaternary structure, homotetramer; dimer of dimers.

It localises to the cytoplasm. It carries out the reaction L-aspartate 4-semialdehyde + pyruvate = (2S,4S)-4-hydroxy-2,3,4,5-tetrahydrodipicolinate + H2O + H(+). Its pathway is amino-acid biosynthesis; L-lysine biosynthesis via DAP pathway; (S)-tetrahydrodipicolinate from L-aspartate: step 3/4. In terms of biological role, catalyzes the condensation of (S)-aspartate-beta-semialdehyde [(S)-ASA] and pyruvate to 4-hydroxy-tetrahydrodipicolinate (HTPA). The chain is 4-hydroxy-tetrahydrodipicolinate synthase from Methanosphaerula palustris (strain ATCC BAA-1556 / DSM 19958 / E1-9c).